The primary structure comprises 514 residues: Glutathione-binding protein GsiB (514 aa).

The N-terminal stretch at Met1–Ala26 is a signal peptide.

It belongs to the bacterial solute-binding protein 5 family. The complex is composed of two ATP-binding proteins (GsiA), two transmembrane proteins (GsiC and GsiD) and a solute-binding protein (GsiB).

It localises to the periplasm. Functionally, part of the ABC transporter complex GsiABCD involved in glutathione import. Binds glutathione. In Shigella flexneri serotype 5b (strain 8401), this protein is Glutathione-binding protein GsiB.